Here is a 263-residue protein sequence, read N- to C-terminus: uncharacterized protein (263 aa).

The protein localises to the mitochondrion. This is an uncharacterized protein from Schizosaccharomyces pombe (strain 972 / ATCC 24843) (Fission yeast).